The chain runs to 99 residues: Putative pterin-4-alpha-carbinolamine dehydratase (99 aa).

The protein belongs to the pterin-4-alpha-carbinolamine dehydratase family.

It carries out the reaction (4aS,6R)-4a-hydroxy-L-erythro-5,6,7,8-tetrahydrobiopterin = (6R)-L-erythro-6,7-dihydrobiopterin + H2O. The chain is Putative pterin-4-alpha-carbinolamine dehydratase from Bradyrhizobium sp. (strain BTAi1 / ATCC BAA-1182).